A 156-amino-acid chain; its full sequence is Small ribosomal subunit protein uS7 (156 aa).

This sequence belongs to the universal ribosomal protein uS7 family. As to quaternary structure, part of the 30S ribosomal subunit. Contacts proteins S9 and S11.

Functionally, one of the primary rRNA binding proteins, it binds directly to 16S rRNA where it nucleates assembly of the head domain of the 30S subunit. Is located at the subunit interface close to the decoding center, probably blocks exit of the E-site tRNA. The sequence is that of Small ribosomal subunit protein uS7 from Geobacter sp. (strain M21).